The sequence spans 246 residues: Large ribosomal subunit protein uL3 (246 aa).

The interval 140–162 (SHRSIGSTGGRQDPGKTFKNKKM) is disordered. An N5-methylglutamine modification is found at Gln-151.

This sequence belongs to the universal ribosomal protein uL3 family. In terms of assembly, part of the 50S ribosomal subunit. Forms a cluster with proteins L14 and L19. In terms of processing, methylated by PrmB.

Functionally, one of the primary rRNA binding proteins, it binds directly near the 3'-end of the 23S rRNA, where it nucleates assembly of the 50S subunit. The protein is Large ribosomal subunit protein uL3 of Methylobacterium sp. (strain 4-46).